The following is a 463-amino-acid chain: MKLSGISLWLLAASIVHAGKSQFEAFENEFYFKDHLGTISVYHEPYFNGPTTSFPESCAIKQVHLLQRHGSRNPTGDDTATDVSSAQYIDIFQNKLLNGSIPVNFSYPENPLYFVKHWTPVIKAENADQLSSSGRIELFDLGRQVFERYYELFDTDVYDINTAAQERVVDSAEWFSYGMFGDDMQNKTNFIVLPEDDSAGANSLAMYYSCPVYEDNNIDENTTEAAHTSWRNVFLKPIANRLNKYFDSGYNLTVSDVRSLYYICVYEIALRDNSDFCSLFTPSEFLNFEYDSDLDYAYWGGPASEWASTLGGAYVNNLANNLRKGVNNASDRKVFLAFTHDSQIIPVEAALGFFPDITPEHPLPTDKNIFTYSLKTSSFVPFAGNLITELFLCSDNKYYVRHLVNQQVYPLTDCGYGPSGASDGLCELSAYLNSSVRVNSTSNGIANFNSQCQAHSTNVTVYY.

Residues 1 to 18 (MKLSGISLWLLAASIVHA) form the signal peptide. His-69 acts as the Nucleophile in catalysis. N-linked (GlcNAc...) asparagine glycans are attached at residues Asn-98, Asn-104, Asn-186, Asn-221, Asn-251, and Asn-328. Residue Asp-341 is the Proton donor of the active site. 3 N-linked (GlcNAc...) asparagine glycosylation sites follow: Asn-433, Asn-439, and Asn-458.

It belongs to the histidine acid phosphatase family.

Its subcellular location is the secreted. It localises to the cell wall. It carries out the reaction a phosphate monoester + H2O = an alcohol + phosphate. Functionally, may dephosphorylate thiamine phosphates. This is Thiamine-repressible acid phosphatase pho4 (pho4) from Schizosaccharomyces pombe (strain 972 / ATCC 24843) (Fission yeast).